A 538-amino-acid polypeptide reads, in one-letter code: Chaperonin GroEL (538 aa).

Residues 29-32, 86-90, glycine 413, 476-478, and aspartate 492 each bind ATP; these read TIGP, DGTTT, and NAA.

Belongs to the chaperonin (HSP60) family. Forms a cylinder of 14 subunits composed of two heptameric rings stacked back-to-back. Interacts with the co-chaperonin GroES.

It localises to the cytoplasm. The enzyme catalyses ATP + H2O + a folded polypeptide = ADP + phosphate + an unfolded polypeptide.. Together with its co-chaperonin GroES, plays an essential role in assisting protein folding. The GroEL-GroES system forms a nano-cage that allows encapsulation of the non-native substrate proteins and provides a physical environment optimized to promote and accelerate protein folding. This Staphylococcus aureus (strain bovine RF122 / ET3-1) protein is Chaperonin GroEL.